A 69-amino-acid chain; its full sequence is AVDFDKQCVPTADPGPCKGFMPMWWYNIFTSQCEEFIYGGCQGNDNRYRTKEECDKTCAEASATWDVNA.

Positions 8–58 constitute a BPTI/Kunitz inhibitor domain; the sequence is CVPTADPGPCKGFMPMWWYNIFTSQCEEFIYGGCQGNDNRYRTKEECDKTC. Cystine bridges form between C8–C58, C17–C41, and C33–C54.

It is found in the secreted. In terms of biological role, serine protease inhibitor. The polypeptide is Protease inhibitor carrapatin (Rhipicephalus microplus (Cattle tick)).